We begin with the raw amino-acid sequence, 163 residues long: Lipoprotein signal peptidase (163 aa).

4 consecutive transmembrane segments (helical) span residues 5-25, 37-57, 67-87, and 91-111; these read VLTF…TKSL, IIPG…FGML, LMLV…VFKS, and LSNL…GNLY. Active-site residues include Asp121 and Asp139. Residues 132–152 traverse the membrane as a helical segment; the sequence is WPAFNVADASITIGIALFIGY.

It belongs to the peptidase A8 family.

Its subcellular location is the cell inner membrane. It catalyses the reaction Release of signal peptides from bacterial membrane prolipoproteins. Hydrolyzes -Xaa-Yaa-Zaa-|-(S,diacylglyceryl)Cys-, in which Xaa is hydrophobic (preferably Leu), and Yaa (Ala or Ser) and Zaa (Gly or Ala) have small, neutral side chains.. The protein operates within protein modification; lipoprotein biosynthesis (signal peptide cleavage). Functionally, this protein specifically catalyzes the removal of signal peptides from prolipoproteins. This is Lipoprotein signal peptidase from Sulfurihydrogenibium sp. (strain YO3AOP1).